The chain runs to 109 residues: Thiosulfate sulfurtransferase GlpE (109 aa).

A Rhodanese domain is found at 17 to 105; sequence KEGKTALVDI…WARSYPQDIT (89 aa). The active-site Cysteine persulfide intermediate is cysteine 65.

The protein belongs to the GlpE family.

It localises to the cytoplasm. The enzyme catalyses thiosulfate + hydrogen cyanide = thiocyanate + sulfite + 2 H(+). It catalyses the reaction thiosulfate + [thioredoxin]-dithiol = [thioredoxin]-disulfide + hydrogen sulfide + sulfite + 2 H(+). Its function is as follows. Transferase that catalyzes the transfer of sulfur from thiosulfate to thiophilic acceptors such as cyanide or dithiols. May function in a CysM-independent thiosulfate assimilation pathway by catalyzing the conversion of thiosulfate to sulfite, which can then be used for L-cysteine biosynthesis. The polypeptide is Thiosulfate sulfurtransferase GlpE (Yersinia pestis bv. Antiqua (strain Antiqua)).